Here is a 530-residue protein sequence, read N- to C-terminus: Alpha-(1,3)-fucosyltransferase 4 (530 aa).

Disordered stretches follow at residues 1 to 48 (MRRL…RAVP) and 66 to 112 (HLGG…STPA). The Cytoplasmic segment spans residues 1–147 (MRRLWGAARK…GGRRGWRRGR (147 aa)). A compositionally biased stretch (basic and acidic residues) spans 88-106 (ASGERQRRLEPQLQHESRC). The helical; Signal-anchor for type II membrane protein transmembrane segment at 148 to 172 (GLPWTVCVLAAAGLTCTALITYACW) threads the bilayer. At 173–530 (GQLPPLPWAS…IRNLASWFER (358 aa)) the chain is on the lumenal side. Residues asparagine 216 and asparagine 315 are each glycosylated (N-linked (GlcNAc...) asparagine).

The protein belongs to the glycosyltransferase 10 family. Expressed at low levels in bone marrow-derived mesenchymal stem cells. In terms of tissue distribution, expressed in cord blood immature promyelocytes and in peripheral blood myeloid and lymphoid cell populations.

It is found in the golgi apparatus. The protein localises to the golgi stack membrane. The enzyme catalyses a beta-D-galactosyl-(1-&gt;4)-N-acetyl-beta-D-glucosaminyl derivative + GDP-beta-L-fucose = a beta-D-galactosyl-(1-&gt;4)-[alpha-L-fucosyl-(1-&gt;3)]-N-acetyl-beta-D-glucosaminyl derivative + GDP + H(+). It carries out the reaction an N-acetyl-alpha-neuraminyl-(2-&gt;3)-beta-D-galactosyl-(1-&gt;4)-N-acetyl-beta-D-glucosaminyl derivative + GDP-beta-L-fucose = an alpha-Neu5Ac-(2-&gt;3)-beta-D-Gal-(1-&gt;4)-[alpha-L-Fuc-(1-&gt;3)]-beta-D-GlcNAc derivative + GDP + H(+). It catalyses the reaction an alpha-Neu5Ac-(2-&gt;3)-beta-D-Gal-(1-&gt;4)-beta-D-GlcNAc-(1-&gt;3)-beta-D-Gal-(1-&gt;4)-beta-D-GlcNAc derivative + GDP-beta-L-fucose = an alpha-Neu5Ac-(2-&gt;3)-beta-D-Gal-(1-&gt;4)-beta-D-GlcNAc-(1-&gt;3)-beta-D-Gal-(1-&gt;4)-[alpha-L-Fuc-(1-&gt;3)]-beta-D-GlcNAc derivative + GDP + H(+). The catalysed reaction is an alpha-Neu5Ac-(2-&gt;3)-beta-D-Gal-(1-&gt;4)-beta-D-GlcNAc6S derivative + GDP-beta-L-fucose = an alpha-Neu5Ac-(2-&gt;3)-beta-D-Gal-(1-&gt;4)-[alpha-L-Fuc-(1-&gt;3)]-beta-D-GlcNAc6S derivative + GDP + H(+). The protein operates within protein modification; protein glycosylation. Its function is as follows. Catalyzes alpha(1-&gt;3) linkage of fucosyl moiety transferred from GDP-beta-L-fucose to N-acetyl glucosamine (GlcNAc) within type 2 lactosamine (LacNAc, Gal-beta(1-&gt;4)GlcNAc) glycan attached to N- or O-linked glycoproteins. Robustly fucosylates nonsialylated distal LacNAc unit of the polylactosamine chain to form Lewis X antigen (CD15), a glycan determinant known to mediate important cellular functions in development and immunity. Fucosylates with lower efficiency sialylated LacNAc acceptors to form sialyl Lewis X and 6-sulfo sialyl Lewis X determinants that serve as recognition epitopes for C-type lectins. Together with FUT7 contributes to SELE, SELL and SELP selectin ligand biosynthesis and selectin-dependent lymphocyte homing, leukocyte migration and blood leukocyte homeostasis. In a cell type specific manner, may also fucosylate the internal LacNAc unit of the polylactosamine chain to form VIM-2 antigen that serves as recognition epitope for SELE. In terms of biological role, does not generate Lewis X antigens. This chain is Alpha-(1,3)-fucosyltransferase 4, found in Homo sapiens (Human).